Consider the following 148-residue polypeptide: Ubiquitin-conjugating enzyme E2-17 kDa (148 aa).

A UBC core domain is found at 1-147 (MASKRILKEL…ARSWTQKYAM (147 aa)). The active-site Glycyl thioester intermediate is Cys85.

This sequence belongs to the ubiquitin-conjugating enzyme family.

It carries out the reaction S-ubiquitinyl-[E1 ubiquitin-activating enzyme]-L-cysteine + [E2 ubiquitin-conjugating enzyme]-L-cysteine = [E1 ubiquitin-activating enzyme]-L-cysteine + S-ubiquitinyl-[E2 ubiquitin-conjugating enzyme]-L-cysteine.. Its pathway is protein modification; protein ubiquitination. Functionally, catalyzes the covalent attachment of ubiquitin to other proteins. Mediates the selective degradation of short-lived and abnormal proteins. The chain is Ubiquitin-conjugating enzyme E2-17 kDa from Solanum lycopersicum (Tomato).